We begin with the raw amino-acid sequence, 367 residues long: Voltage-gated potassium channel subunit beta-2 (367 aa).

Phosphoserine is present on residues S9, S14, and S20. R28 carries the post-translational modification Asymmetric dimethylarginine; alternate. R28 is modified (omega-N-methylarginine; alternate). S31 carries the post-translational modification Phosphoserine. Residues T56, W57, Q63, and D85 each coordinate NADP(+). Y90 functions as the Proton donor/acceptor in the catalytic mechanism. S112 bears the Phosphoserine mark. K124 carries the N6-acetyllysine modification. Residues N158, S188, R189, Q214, W243, S244, P245, L246, A247, C248, K254, Y262, R264, G323, S325, Q329, E332, and N333 each coordinate NADP(+).

This sequence belongs to the shaker potassium channel beta subunit family. Homotetramer. Interaction with tetrameric potassium channel alpha subunits gives rise to a heterooctamer. Identified in potassium channel complexes containing KCNA1, KCNA2, KCNA4, KCNA5, KCNA6, KCNAB1, KCNAB2 and KCND3. Interacts (in unphosphorylated form) with MAPRE1. Forms a ternary complex with SQSTM1 and PRKCZ. Post-translationally, phosphorylated by PRKCZ; may be regulated by incorporation in a complex composed of PRKCZ and SQSTM1. In terms of tissue distribution, detected in brain. Detected at basket cell terminals in cerebellum and in the juxtaparanodal region of nodes of Ranvier (at protein level). Strongest expression in brain and eye. Highest levels in brain detected in brainstem and diencephalon. Strong expression also detected in lung and heart. Moderate expression in kidney, T-lymphocytes and skeletal muscle.

Its subcellular location is the cytoplasm. The protein localises to the membrane. It localises to the cell membrane. It is found in the cell projection. The protein resides in the axon. Its subcellular location is the synapse. The protein localises to the synaptosome. It localises to the cytoskeleton. The catalysed reaction is hydroxyacetone + NADP(+) = methylglyoxal + NADPH + H(+). It carries out the reaction (E)-4-oxonon-2-en-1-ol + NADP(+) = (E)-4-oxonon-2-enal + NADPH + H(+). In terms of biological role, regulatory subunit of the voltage-gated potassium (Kv) Shaker channel family. Shaker channels are composed of pore-forming and potassium-conducting alpha subunits and of regulatory beta subunits. The beta-2/KCNAB2 subunit promotes potassium channel closure via a mechanism that does not involve physical obstruction of the channel pore. Promotes the inactivation of Kv1.4/KCNA4 and Kv1.5/KCNA5 alpha subunit-containing channels. Displays nicotinamide adenine dinucleotide phosphate (NADPH)-dependent aldoketoreductase activity by catalyzing the NADPH-dependent reduction of a wide range of aldehyde and ketone substrates. Substrate specificity includes methylglyoxal, 9,10-phenanthrenequinone, prostaglandin J2, 4-nitrobenzaldehyde, 4-nitroacetophenone and 4-oxo-trans-2-nonenal (in vitro, no physiological substrate identified yet). The binding of oxidized and reduced nucleotide cofactors alters Kv channel gating and may contribute to dynamic fine tuning of cell excitability. Contributes to the regulation of nerve signaling, and prevents neuronal hyperexcitability. In Mus musculus (Mouse), this protein is Voltage-gated potassium channel subunit beta-2.